The chain runs to 394 residues: Actin-related protein 2-A (394 aa).

Residues 160–162, 214–218, and 305–310 each bind ATP; these read GDG, RMIKE, and GGSTMY.

It belongs to the actin family. ARP2 subfamily. In terms of assembly, component of the Arp2/3 complex composed of actr2/arp2, actr3/arp3, arpc1 (arpc1a or arpc1b), arpc2, arpc3, arpc4 and arpc5.

The protein resides in the cytoplasm. The protein localises to the cytoskeleton. Its subcellular location is the cell projection. It localises to the nucleus. ATP-binding component of the Arp2/3 complex, a multiprotein complex that mediates actin polymerization upon stimulation by nucleation-promoting factor (NPF). The Arp2/3 complex mediates the formation of branched actin networks in the cytoplasm, providing the force for cell motility. Seems to contact the pointed end of the daughter actin filament. In addition to its role in the cytoplasmic cytoskeleton, the Arp2/3 complex also promotes actin polymerization in the nucleus, thereby regulating gene transcription and repair of damaged DNA. The Arp2/3 complex promotes homologous recombination (HR) repair in response to DNA damage by promoting nuclear actin polymerization, leading to drive motility of double-strand breaks (DSBs). The sequence is that of Actin-related protein 2-A (actr2-a) from Xenopus laevis (African clawed frog).